The chain runs to 229 residues: MTPKLIVALDFDNQDNALQLVEKLDPNHCALKVGSELFTLLGPQFVKELVRREFKVFLDLKFHDIPNTVAKACHSAAELGVWMMNVHAIGGLKMLQAARESLKTYGKDKPLLIAVTVLTSFEEAELASVGISNTLPEQATHLAMLAREAGLDGVVSSAHEVKIIKQKCGENFITVTPGIRLPNNLKDDQSRVMTPQQAIREGSDFLVIGRPITQASNPHEVVSALLRDL.

Residues aspartate 10, lysine 32, 59–68, threonine 119, arginine 180, glutamine 189, glycine 209, and arginine 210 contribute to the substrate site; that span reads DLKFHDIPNT. Lysine 61 functions as the Proton donor in the catalytic mechanism.

It belongs to the OMP decarboxylase family. Type 1 subfamily. As to quaternary structure, homodimer.

It carries out the reaction orotidine 5'-phosphate + H(+) = UMP + CO2. It functions in the pathway pyrimidine metabolism; UMP biosynthesis via de novo pathway; UMP from orotate: step 2/2. In terms of biological role, catalyzes the decarboxylation of orotidine 5'-monophosphate (OMP) to uridine 5'-monophosphate (UMP). The sequence is that of Orotidine 5'-phosphate decarboxylase from Legionella pneumophila (strain Corby).